The chain runs to 557 residues: Membrane protein insertase YidC (557 aa).

Residues 7–27 (ILLVALAVVSYLLVLQWNQDY) traverse the membrane as a helical segment. A disordered region spans residues 42 to 77 (ASPALPETVPGDSSTSADVPTAGSGNQVPDSAASTA). Polar residues predominate over residues 52 to 77 (GDSSTSADVPTAGSGNQVPDSAASTA). The next 3 membrane-spanning stretches (helical) occupy residues 370–390 (WGWSIIVLTVIIKLAFFPLSA), 436–456 (LGGCLPILVQMPVFLALYWVL), and 514–534 (PIIFTFFFLWFPAGLVLYWVV).

This sequence belongs to the OXA1/ALB3/YidC family. Type 1 subfamily. As to quaternary structure, interacts with the Sec translocase complex via SecD. Specifically interacts with transmembrane segments of nascent integral membrane proteins during membrane integration.

Its subcellular location is the cell inner membrane. Its function is as follows. Required for the insertion and/or proper folding and/or complex formation of integral membrane proteins into the membrane. Involved in integration of membrane proteins that insert both dependently and independently of the Sec translocase complex, as well as at least some lipoproteins. Aids folding of multispanning membrane proteins. The protein is Membrane protein insertase YidC of Azotobacter vinelandii (strain DJ / ATCC BAA-1303).